The chain runs to 217 residues: LLEGFLVGGGVPGPGTACLTKALKDSGDLLVELAVIICAYQNGKDLQEQDFKELKELLERTLERAGCALDDIVADLGLEELLGSIGVSTGDIIQGLYKLLKELKIDETVFNAVCDVTKKMLDNKCLPKILQGDLVKFLKDLKYKVCIEGGDPELIIKDLKIILERLPCVLGGVGLDDLFKNIFVKDGILSFEGIAKPLGDLLILVLCPNVKNINVSS.

4 cysteine pairs are disulfide-bonded: C18/C67, C38/C114, C125/C168, and C146/C207.

Monomer. In terms of tissue distribution, exclusively expressed in females in the early oviduct, the glandular part of the oviduct (pars convoluta dilata) and in the cloaca.

The protein resides in the secreted. Its function is as follows. Acts as a surfactant. Is the major protein constituent (45%) of foam nests. Has no antimicrobial activity, no larvicidal activity, and is not toxic to mice. The polypeptide is Ranaspumin (Leptodactylus vastus (Northeastern pepper frog)).